Reading from the N-terminus, the 165-residue chain is Transcription antitermination protein NusB (165 aa).

The tract at residues 1–27 (MISDDTDQFNPRDAKSPEAAKGKSAKR) is disordered. Over residues 10–21 (NPRDAKSPEAAK) the composition is skewed to basic and acidic residues.

Belongs to the NusB family.

Its function is as follows. Involved in transcription antitermination. Required for transcription of ribosomal RNA (rRNA) genes. Binds specifically to the boxA antiterminator sequence of the ribosomal RNA (rrn) operons. The polypeptide is Transcription antitermination protein NusB (Pseudomonas savastanoi pv. phaseolicola (strain 1448A / Race 6) (Pseudomonas syringae pv. phaseolicola (strain 1448A / Race 6))).